Consider the following 199-residue polypeptide: Glycerol-3-phosphate acyltransferase (199 aa).

A run of 5 helical transmembrane segments spans residues 4 to 24 (FALF…AILI), 56 to 76 (LAVL…GYYL), 80 to 100 (QFEL…PIFF), 115 to 135 (IAPI…FVFL), and 154 to 176 (YVWW…LIYR).

This sequence belongs to the PlsY family. As to quaternary structure, probably interacts with PlsX.

It localises to the cell inner membrane. The catalysed reaction is an acyl phosphate + sn-glycerol 3-phosphate = a 1-acyl-sn-glycero-3-phosphate + phosphate. Its pathway is lipid metabolism; phospholipid metabolism. Functionally, catalyzes the transfer of an acyl group from acyl-phosphate (acyl-PO(4)) to glycerol-3-phosphate (G3P) to form lysophosphatidic acid (LPA). This enzyme utilizes acyl-phosphate as fatty acyl donor, but not acyl-CoA or acyl-ACP. The chain is Glycerol-3-phosphate acyltransferase from Haemophilus influenzae (strain PittEE).